An 86-amino-acid chain; its full sequence is UPF0297 protein LCABL_08470 (86 aa).

It belongs to the UPF0297 family.

In Lacticaseibacillus casei (strain BL23) (Lactobacillus casei), this protein is UPF0297 protein LCABL_08470.